The following is a 554-amino-acid chain: 3-(3-hydroxy-phenyl)propionate/3-hydroxycinnamic acid hydroxylase (554 aa).

FAD contacts are provided by residues 17–46 and 285–295; these read QVAI…VVEK and FRIDRVLLAGD.

The protein belongs to the PheA/TfdB FAD monooxygenase family. FAD serves as cofactor.

The enzyme catalyses 3-(3-hydroxyphenyl)propanoate + NADH + O2 + H(+) = 3-(2,3-dihydroxyphenyl)propanoate + NAD(+) + H2O. It catalyses the reaction (2E)-3-(3-hydroxyphenyl)prop-2-enoate + NADH + O2 + H(+) = (2E)-3-(2,3-dihydroxyphenyl)prop-2-enoate + NAD(+) + H2O. Its pathway is aromatic compound metabolism; 3-phenylpropanoate degradation. In terms of biological role, catalyzes the insertion of one atom of molecular oxygen into position 2 of the phenyl ring of 3-(3-hydroxyphenyl)propionate (3-HPP) and hydroxycinnamic acid (3HCI). This Escherichia coli O157:H7 protein is 3-(3-hydroxy-phenyl)propionate/3-hydroxycinnamic acid hydroxylase.